The primary structure comprises 51 residues: uncharacterized protein (51 aa).

This is an uncharacterized protein from Borreliella burgdorferi (strain ATCC 35210 / DSM 4680 / CIP 102532 / B31) (Borrelia burgdorferi).